The chain runs to 229 residues: Flavin-dependent thymidylate synthase (229 aa).

The ThyX domain maps to 1–217; sequence MEFKVLDKGF…PWTFESFLKF (217 aa). FAD is bound by residues Thr-55, 78–80, and Glu-86; that span reads RHR. Residues 75 to 78, 86 to 90, and Arg-156 each bind dUMP; these read QWFR and EASLR. A ThyX motif motif is present at residues 78–88; sequence RHRIGSFNEAS. Residues 172 to 174 and Asn-178 contribute to the FAD site; that span reads NAR. Arg-183 is a binding site for dUMP. The active-site Involved in ionization of N3 of dUMP, leading to its activation is the Arg-183.

This sequence belongs to the thymidylate synthase ThyX family. In terms of assembly, homotetramer. FAD serves as cofactor.

The enzyme catalyses dUMP + (6R)-5,10-methylene-5,6,7,8-tetrahydrofolate + NADPH + H(+) = dTMP + (6S)-5,6,7,8-tetrahydrofolate + NADP(+). It participates in pyrimidine metabolism; dTTP biosynthesis. Catalyzes the reductive methylation of 2'-deoxyuridine-5'-monophosphate (dUMP) to 2'-deoxythymidine-5'-monophosphate (dTMP) while utilizing 5,10-methylenetetrahydrofolate (mTHF) as the methyl donor, and NADPH and FADH(2) as the reductant. The chain is Flavin-dependent thymidylate synthase from Thermosipho melanesiensis (strain DSM 12029 / CIP 104789 / BI429).